A 186-amino-acid polypeptide reads, in one-letter code: Ribosome-recycling factor (186 aa).

This sequence belongs to the RRF family.

The protein resides in the cytoplasm. In terms of biological role, responsible for the release of ribosomes from messenger RNA at the termination of protein biosynthesis. May increase the efficiency of translation by recycling ribosomes from one round of translation to another. In Bartonella bacilliformis (strain ATCC 35685 / KC583 / Herrer 020/F12,63), this protein is Ribosome-recycling factor.